A 238-amino-acid chain; its full sequence is tRNA1(Val) (adenine(37)-N6)-methyltransferase (238 aa).

Belongs to the methyltransferase superfamily. tRNA (adenine-N(6)-)-methyltransferase family.

The protein localises to the cytoplasm. It carries out the reaction adenosine(37) in tRNA1(Val) + S-adenosyl-L-methionine = N(6)-methyladenosine(37) in tRNA1(Val) + S-adenosyl-L-homocysteine + H(+). Functionally, specifically methylates the adenine in position 37 of tRNA(1)(Val) (anticodon cmo5UAC). The protein is tRNA1(Val) (adenine(37)-N6)-methyltransferase of Shewanella baltica (strain OS195).